The following is a 420-amino-acid chain: NEDD8-specific protease 1 (420 aa).

The segment covering 257 to 281 (KSSDSSETSHESSNSNLKKSSESGS) has biased composition (low complexity). Residues 257–420 (KSSDSSETSH…EELVSGDFPF (164 aa)) form a disordered region. A compositionally biased stretch (basic and acidic residues) spans 286 to 296 (NNHESDKDLHH). Residues 297–310 (EGHHHHHHHHHHHH) are compositionally biased toward basic residues. Over residues 311-324 (SHDDDPSSPAEKKQ) the composition is skewed to basic and acidic residues. A phosphoserine mark is found at S329, S340, and S351. Residues 355–377 (NKEDHLPLLSDEKLDKSAIDKIE) are compositionally biased toward basic and acidic residues.

This sequence belongs to the peptidase C48 family. In terms of assembly, interacts with csn1. It is, however, not a component of the signalosome.

Its subcellular location is the cytoplasm. In terms of biological role, protease that catalyzes two essential functions in the NEDD8 pathway: processing of full-length NEDD8 to its mature form and deconjugation of NEDD8 from targeted proteins such as the pcu1, pcu2 and pcu4 cullins and other proteins. The chain is NEDD8-specific protease 1 (nep1) from Schizosaccharomyces pombe (strain 972 / ATCC 24843) (Fission yeast).